The primary structure comprises 156 residues: Small ribosomal subunit protein uS7 (156 aa).

Belongs to the universal ribosomal protein uS7 family. In terms of assembly, part of the 30S ribosomal subunit. Contacts proteins S9 and S11.

Functionally, one of the primary rRNA binding proteins, it binds directly to 16S rRNA where it nucleates assembly of the head domain of the 30S subunit. Is located at the subunit interface close to the decoding center, probably blocks exit of the E-site tRNA. The protein is Small ribosomal subunit protein uS7 of Streptococcus thermophilus (strain CNRZ 1066).